A 455-amino-acid chain; its full sequence is Exodeoxyribonuclease 7 large subunit (455 aa).

Belongs to the XseA family. Heterooligomer composed of large and small subunits.

Its subcellular location is the cytoplasm. It catalyses the reaction Exonucleolytic cleavage in either 5'- to 3'- or 3'- to 5'-direction to yield nucleoside 5'-phosphates.. Its function is as follows. Bidirectionally degrades single-stranded DNA into large acid-insoluble oligonucleotides, which are then degraded further into small acid-soluble oligonucleotides. The sequence is that of Exodeoxyribonuclease 7 large subunit from Lactobacillus acidophilus (strain ATCC 700396 / NCK56 / N2 / NCFM).